A 286-amino-acid polypeptide reads, in one-letter code: 33 kDa chaperonin (286 aa).

2 cysteine pairs are disulfide-bonded: Cys-233–Cys-235 and Cys-267–Cys-270.

This sequence belongs to the HSP33 family. Under oxidizing conditions two disulfide bonds are formed involving the reactive cysteines. Under reducing conditions zinc is bound to the reactive cysteines and the protein is inactive.

The protein resides in the cytoplasm. In terms of biological role, redox regulated molecular chaperone. Protects both thermally unfolding and oxidatively damaged proteins from irreversible aggregation. Plays an important role in the bacterial defense system toward oxidative stress. This is 33 kDa chaperonin from Histophilus somni (strain 129Pt) (Haemophilus somnus).